Consider the following 523-residue polypeptide: Synaptotagmin-10 (523 aa).

The Vesicular portion of the chain corresponds to 1–55 (MSFHKEDGVNSLCQKALHIVTELCFAGQVEWEKCSGIFPRDRGSQGGSSTDISVS). Residues 13 to 35 (CQKALHIVTELCFAGQVEWEKCS) are cysteine motif. The helical transmembrane segment at 56–76 (LLAVVVSFCGLALLVVSLFVF) threads the bilayer. Residues 77-523 (WKLCWPCWKS…CPSPKPPSTP (447 aa)) are Cytoplasmic-facing. Threonine 136 is modified (phosphothreonine). C2 domains follow at residues 231–352 (ICGK…TVWK) and 363–496 (DLGE…THWH). Residues aspartate 262, aspartate 268, aspartate 320, phenylalanine 321, aspartate 322, serine 325, aspartate 328, aspartate 394, aspartate 400, aspartate 454, and aspartate 456 each coordinate Ca(2+).

This sequence belongs to the synaptotagmin family. As to quaternary structure, homodimer; disulfide-linked via the cysteine motif. Can also form heterodimers with SYT3, SYT6, SYT7 and SYT9. It depends on Ca(2+) as a cofactor. As to expression, expressed only in pancreas, lung and kidney.

It is found in the cytoplasmic vesicle. The protein resides in the secretory vesicle membrane. Its function is as follows. Ca(2+) sensor specifically required for the Ca(2+)-dependent exocytosis of secretory vesicles containing IGF1 in neurons of the olfactory bulb. Exocytosis of IGF1 is required for sensory perception of smell. Not involved in Ca(2+)-dependent synaptic vesicle exocytosis. Acts through Ca(2+) and phospholipid binding to the C2 domain: Ca(2+) induces binding of the C2-domains to phospholipid membranes and to assembled SNARE-complexes; both actions contribute to triggering exocytosis. The chain is Synaptotagmin-10 (SYT10) from Homo sapiens (Human).